The sequence spans 577 residues: Arginine--tRNA ligase (577 aa).

The 'HIGH' region motif lies at 122–132 (PNVAKEMHVGH).

Belongs to the class-I aminoacyl-tRNA synthetase family. Monomer.

The protein resides in the cytoplasm. It carries out the reaction tRNA(Arg) + L-arginine + ATP = L-arginyl-tRNA(Arg) + AMP + diphosphate. The chain is Arginine--tRNA ligase from Vibrio campbellii (strain ATCC BAA-1116).